A 431-amino-acid chain; its full sequence is Urokinase-type plasminogen activator (431 aa).

The first 20 residues, Met-1–Gly-20, serve as a signal peptide directing secretion. One can recognise an EGF-like domain in the interval Val-27–Glu-63. Intrachain disulfides connect Cys-31/Cys-39, Cys-33/Cys-51, Cys-53/Cys-62, Cys-70/Cys-151, Cys-91/Cys-133, and Cys-122/Cys-146. The tract at residues Leu-34–Phe-57 is binds urokinase plasminogen activator surface receptor. Thr-38 is a glycosylation site (O-linked (Fuc) threonine). In terms of domain architecture, Kringle spans Cys-70–Cys-151. The segment at Ala-152–Phe-177 is connecting peptide. Ser-158 carries the post-translational modification Phosphoserine. Intrachain disulfides connect Cys-168/Cys-299, Cys-209/Cys-225, Cys-217/Cys-288, Cys-313/Cys-382, Cys-345/Cys-361, and Cys-372/Cys-400. Residues Ile-179 to Lys-424 enclose the Peptidase S1 domain. Active-site charge relay system residues include His-224 and Asp-275. The N-linked (GlcNAc...) asparagine glycan is linked to Asn-322. Ser-323 carries the post-translational modification Phosphoserine. Ser-376 functions as the Charge relay system in the catalytic mechanism.

Belongs to the peptidase S1 family. In terms of assembly, found in high and low molecular mass forms. Each consists of two chains, A and B. The high molecular mass form contains a long chain A which is cleaved to yield a short chain A. Forms heterodimer with SERPINA5. Binds LRP1B; binding is followed by internalization and degradation. Interacts with MRC2. Interacts with PLAUR. In complex with SERPINE1, interacts with PLAUR/uPAR. Interacts with SORL1 and LRP1, either alone or in complex with SERPINE1; these interactions are abolished in the presence of LRPAP1/RAP. The ternary complex composed of PLAUR-PLAU-PAI1 also interacts with SORLA. In terms of processing, phosphorylation of Ser-158 and Ser-323 abolishes proadhesive ability but does not interfere with receptor binding. Post-translationally, produced as an inactive single-chain protein (pro-uPA or sc-uPA), is processed into the active disulfide-linked two-chain form of PLAU/uPA by a proteolytic event mediated, at least, by TMPRSS4. As to expression, expressed in the prostate gland and prostate cancers.

The protein localises to the secreted. The catalysed reaction is Specific cleavage of Arg-|-Val bond in plasminogen to form plasmin.. Inhibited by SERPINA5. Inhibited by SERPINE1. Functionally, specifically cleaves the zymogen plasminogen to form the active enzyme plasmin. The sequence is that of Urokinase-type plasminogen activator from Homo sapiens (Human).